We begin with the raw amino-acid sequence, 274 residues long: 3-methyl-2-oxobutanoate hydroxymethyltransferase (274 aa).

2 residues coordinate Mg(2+): aspartate 54 and aspartate 93. 3-methyl-2-oxobutanoate is bound by residues 54–55 (DS), aspartate 93, and lysine 121. Residue glutamate 123 participates in Mg(2+) binding. The Proton acceptor role is filled by glutamate 190.

The protein belongs to the PanB family. As to quaternary structure, homodecamer; pentamer of dimers. The cofactor is Mg(2+).

It localises to the cytoplasm. The catalysed reaction is 3-methyl-2-oxobutanoate + (6R)-5,10-methylene-5,6,7,8-tetrahydrofolate + H2O = 2-dehydropantoate + (6S)-5,6,7,8-tetrahydrofolate. Its pathway is cofactor biosynthesis; (R)-pantothenate biosynthesis; (R)-pantoate from 3-methyl-2-oxobutanoate: step 1/2. Catalyzes the reversible reaction in which hydroxymethyl group from 5,10-methylenetetrahydrofolate is transferred onto alpha-ketoisovalerate to form ketopantoate. This is 3-methyl-2-oxobutanoate hydroxymethyltransferase from Ralstonia nicotianae (strain ATCC BAA-1114 / GMI1000) (Ralstonia solanacearum).